A 212-amino-acid polypeptide reads, in one-letter code: Probable GTP-binding protein EngB (212 aa).

The EngB-type G domain occupies 38–210; that stretch reads SLPEIAFVGK…KASLAKCIKP (173 aa). Residues 46 to 53, 73 to 77, 91 to 94, 158 to 161, and 189 to 191 each bind GTP; these read GKSNVGKS, GRTRQ, DLPG, TKSD, and VSN. Residues Ser53 and Thr75 each contribute to the Mg(2+) site.

Belongs to the TRAFAC class TrmE-Era-EngA-EngB-Septin-like GTPase superfamily. EngB GTPase family. It depends on Mg(2+) as a cofactor.

Necessary for normal cell division and for the maintenance of normal septation. The chain is Probable GTP-binding protein EngB from Rickettsia peacockii (strain Rustic).